A 309-amino-acid chain; its full sequence is Methionyl-tRNA formyltransferase (309 aa).

112-115 (SLLP) is a binding site for (6S)-5,6,7,8-tetrahydrofolate.

The protein belongs to the Fmt family.

The enzyme catalyses L-methionyl-tRNA(fMet) + (6R)-10-formyltetrahydrofolate = N-formyl-L-methionyl-tRNA(fMet) + (6S)-5,6,7,8-tetrahydrofolate + H(+). Attaches a formyl group to the free amino group of methionyl-tRNA(fMet). The formyl group appears to play a dual role in the initiator identity of N-formylmethionyl-tRNA by promoting its recognition by IF2 and preventing the misappropriation of this tRNA by the elongation apparatus. The chain is Methionyl-tRNA formyltransferase from Bartonella quintana (strain Toulouse) (Rochalimaea quintana).